The chain runs to 153 residues: 3-hydroxyacyl-[acyl-carrier-protein] dehydratase FabZ (153 aa).

H54 is a catalytic residue.

This sequence belongs to the thioester dehydratase family. FabZ subfamily.

The protein localises to the cytoplasm. The enzyme catalyses a (3R)-hydroxyacyl-[ACP] = a (2E)-enoyl-[ACP] + H2O. In terms of biological role, involved in unsaturated fatty acids biosynthesis. Catalyzes the dehydration of short chain beta-hydroxyacyl-ACPs and long chain saturated and unsaturated beta-hydroxyacyl-ACPs. This Shewanella amazonensis (strain ATCC BAA-1098 / SB2B) protein is 3-hydroxyacyl-[acyl-carrier-protein] dehydratase FabZ.